A 355-amino-acid chain; its full sequence is Serum paraoxonase/arylesterase 1 (355 aa).

Cysteine 42 and cysteine 353 are oxidised to a cystine. Ca(2+)-binding residues include glutamate 53 and aspartate 54. Residue histidine 115 is the Proton acceptor of the active site. Residues isoleucine 117, asparagine 168, aspartate 169, and asparagine 224 each coordinate Ca(2+). Asparagine 253 carries N-linked (GlcNAc...) asparagine glycosylation. Ca(2+) contacts are provided by aspartate 269 and asparagine 270. N-linked (GlcNAc...) asparagine glycosylation is found at asparagine 270 and asparagine 324.

This sequence belongs to the paraoxonase family. In terms of assembly, homodimer. Interacts with CLU. Requires Ca(2+) as cofactor. Post-translationally, glycosylated. The signal sequence is not cleaved. In terms of tissue distribution, plasma. Associated with HDL.

The protein localises to the secreted. It is found in the extracellular space. The catalysed reaction is a phenyl acetate + H2O = a phenol + acetate + H(+). It catalyses the reaction An aryl dialkyl phosphate + H2O = dialkyl phosphate + an aryl alcohol.. It carries out the reaction an N-acyl-L-homoserine lactone + H2O = an N-acyl-L-homoserine + H(+). Functionally, hydrolyzes the toxic metabolites of a variety of organophosphorus insecticides. Capable of hydrolyzing a broad spectrum of organophosphate substrates and lactones, and a number of aromatic carboxylic acid esters. Mediates an enzymatic protection of low density lipoproteins against oxidative modification. The protein is Serum paraoxonase/arylesterase 1 (Pon1) of Rattus norvegicus (Rat).